Consider the following 544-residue polypeptide: Hydroxylamine reductase (544 aa).

4 residues coordinate [4Fe-4S] cluster: C3, C6, C15, and C21. Positions 244, 268, 313, 400, 428, 453, 487, and 489 each coordinate hybrid [4Fe-2O-2S] cluster. Cysteine persulfide is present on C400.

The protein belongs to the HCP family. [4Fe-4S] cluster is required as a cofactor. Requires hybrid [4Fe-2O-2S] cluster as cofactor.

The protein resides in the cytoplasm. The enzyme catalyses A + NH4(+) + H2O = hydroxylamine + AH2 + H(+). Functionally, catalyzes the reduction of hydroxylamine to form NH(3) and H(2)O. This chain is Hydroxylamine reductase, found in Trichormus variabilis (strain ATCC 29413 / PCC 7937) (Anabaena variabilis).